A 251-amino-acid polypeptide reads, in one-letter code: Imidazole glycerol phosphate synthase subunit HisF (251 aa).

Active-site residues include aspartate 11 and aspartate 130.

This sequence belongs to the HisA/HisF family. In terms of assembly, heterodimer of HisH and HisF.

It localises to the cytoplasm. The enzyme catalyses 5-[(5-phospho-1-deoxy-D-ribulos-1-ylimino)methylamino]-1-(5-phospho-beta-D-ribosyl)imidazole-4-carboxamide + L-glutamine = D-erythro-1-(imidazol-4-yl)glycerol 3-phosphate + 5-amino-1-(5-phospho-beta-D-ribosyl)imidazole-4-carboxamide + L-glutamate + H(+). It participates in amino-acid biosynthesis; L-histidine biosynthesis; L-histidine from 5-phospho-alpha-D-ribose 1-diphosphate: step 5/9. Functionally, IGPS catalyzes the conversion of PRFAR and glutamine to IGP, AICAR and glutamate. The HisF subunit catalyzes the cyclization activity that produces IGP and AICAR from PRFAR using the ammonia provided by the HisH subunit. The sequence is that of Imidazole glycerol phosphate synthase subunit HisF from Natranaerobius thermophilus (strain ATCC BAA-1301 / DSM 18059 / JW/NM-WN-LF).